Here is a 175-residue protein sequence, read N- to C-terminus: Large ribosomal subunit protein uL10 (175 aa).

This sequence belongs to the universal ribosomal protein uL10 family. Part of the ribosomal stalk of the 50S ribosomal subunit. The N-terminus interacts with L11 and the large rRNA to form the base of the stalk. The C-terminus forms an elongated spine to which L12 dimers bind in a sequential fashion forming a multimeric L10(L12)X complex.

Its function is as follows. Forms part of the ribosomal stalk, playing a central role in the interaction of the ribosome with GTP-bound translation factors. The sequence is that of Large ribosomal subunit protein uL10 from Xylella fastidiosa (strain M12).